We begin with the raw amino-acid sequence, 74 residues long: Large ribosomal subunit protein uL29 (74 aa).

This sequence belongs to the universal ribosomal protein uL29 family.

This Cyanothece sp. (strain PCC 7425 / ATCC 29141) protein is Large ribosomal subunit protein uL29.